Here is a 61-residue protein sequence, read N- to C-terminus: Metallothionein-1M (61 aa).

Residues 1 to 29 (MDPNCSCTTGVSCACTGSCTCKECKCTSC) are beta. Residues cysteine 5, cysteine 7, cysteine 13, cysteine 15, cysteine 19, cysteine 21, cysteine 24, cysteine 26, cysteine 29, cysteine 33, cysteine 34, cysteine 36, cysteine 37, cysteine 41, cysteine 44, cysteine 48, cysteine 50, cysteine 57, cysteine 59, and cysteine 60 each contribute to the a divalent metal cation site. Positions 30–61 (KKSCCSCCPVGCAKCAHGCVCKGTLENCSCCA) are alpha.

This sequence belongs to the metallothionein superfamily. Type 1 family. Monomer.

In terms of biological role, metallothioneins have a high content of cysteine residues that bind various heavy metals; these proteins are transcriptionally regulated by both heavy metals and glucocorticoids. The chain is Metallothionein-1M (MT1M) from Homo sapiens (Human).